Consider the following 1272-residue polypeptide: Vitamin B12-dependent ribonucleotide reductase (1272 aa).

Substrate is bound by residues Ser153, 198–199, Gly230, 474–478, and 675–679; these read AC, NPCSE, and PTGTI. A disulfide bond links Cys199 and Cys487. Catalysis depends on Asn474, which acts as the Proton acceptor. The Cysteine radical intermediate role is filled by Cys476. Residue Glu478 is the Proton acceptor of the active site. Residues 1120–1147 form a disordered region; it reads TLVSSNEGDRAASEPKGSATAAPARGSA.

The protein belongs to the ribonucleoside diphosphate reductase class-2 family. Requires adenosylcob(III)alamin as cofactor.

It carries out the reaction a 2'-deoxyribonucleoside 5'-diphosphate + [thioredoxin]-disulfide + H2O = a ribonucleoside 5'-diphosphate + [thioredoxin]-dithiol. In terms of biological role, catalyzes the reduction of ribonucleotides to deoxyribonucleotides. May function to provide a pool of deoxyribonucleotide precursors for DNA repair during oxygen limitation and/or for immediate growth after restoration of oxygen. This chain is Vitamin B12-dependent ribonucleotide reductase (nrdJ), found in Agrobacterium fabrum (strain C58 / ATCC 33970) (Agrobacterium tumefaciens (strain C58)).